The primary structure comprises 229 residues: tRNA pseudouridine synthase B (229 aa).

The active-site Nucleophile is the D52.

Belongs to the pseudouridine synthase TruB family. Type 1 subfamily.

It carries out the reaction uridine(55) in tRNA = pseudouridine(55) in tRNA. Its function is as follows. Responsible for synthesis of pseudouridine from uracil-55 in the psi GC loop of transfer RNAs. This Flavobacterium johnsoniae (strain ATCC 17061 / DSM 2064 / JCM 8514 / BCRC 14874 / CCUG 350202 / NBRC 14942 / NCIMB 11054 / UW101) (Cytophaga johnsonae) protein is tRNA pseudouridine synthase B.